Consider the following 371-residue polypeptide: Epoxyqueuosine reductase (371 aa).

Asp137 serves as the catalytic Proton donor. Positions 179–211 (IPLPVDTPVENQCGKCTACISSCPTNAILENGV) constitute a 4Fe-4S ferredoxin-type domain. Residues Cys191, Cys194, Cys197, Cys201, Cys217, Cys244, Cys247, and Cys251 each contribute to the [4Fe-4S] cluster site.

It belongs to the QueG family. Monomer. It depends on cob(II)alamin as a cofactor. [4Fe-4S] cluster is required as a cofactor.

It localises to the cytoplasm. The catalysed reaction is epoxyqueuosine(34) in tRNA + AH2 = queuosine(34) in tRNA + A + H2O. Its pathway is tRNA modification; tRNA-queuosine biosynthesis. Its function is as follows. Catalyzes the conversion of epoxyqueuosine (oQ) to queuosine (Q), which is a hypermodified base found in the wobble positions of tRNA(Asp), tRNA(Asn), tRNA(His) and tRNA(Tyr). This Aliivibrio fischeri (strain ATCC 700601 / ES114) (Vibrio fischeri) protein is Epoxyqueuosine reductase.